Consider the following 1203-residue polypeptide: Chromosome partition protein Smc (1203 aa).

An ATP-binding site is contributed by 32-39; it reads PNGSGKSN. Coiled coils occupy residues 167 to 203, 250 to 288, and 327 to 497; these read ILKYRRRKEKALRKLDAMSANLARLTDLTTELRRQLK, MMRRDHDEAAARLAVASEELAAHEAALTELSGRAESVQQ, and DVLE…LERK. In terms of domain architecture, SMC hinge spans 511 to 622; the sequence is GLLGSIAKLV…VVNYLAEALG (112 aa). 3 coiled-coil regions span residues 657 to 689, 720 to 765, and 976 to 1030; these read EVTSEIDKAGAELAAAEAHMAQLNAALSGALSE, RLGQ…NVEQ, and YDRA…RKDL.

The protein belongs to the SMC family. Homodimer.

It localises to the cytoplasm. Functionally, required for chromosome condensation and partitioning. The polypeptide is Chromosome partition protein Smc (Mycobacterium leprae (strain TN)).